A 992-amino-acid chain; its full sequence is MAVVIRLQGLPIVAGTMDIRHFFSGLTIPDGGVHIVGGELGEAFIVFATDEDARLGMMRTGGTIKGSKVTLLLSSKTEMQNMIELSRRRFETANLDIPPANASRSGPPPSSGMSSRVNLPAIVPNFNNPSPSVVTATTSVHESNKNIQTFSTASVGTAPPSMGTSFGSPTFSSTIPSTASPMNTVPPPPIPPIPAMPSLPPLPSIPPIPVPPPVPTLPPVPPVPPIPPVPSVPPMTTLPPMSGMPPLNPPPVAPLPAGMNGSGAPIGLNNNMNPVFLGPLNPVNSIQMNSQSSVKSLPINPDDLYVSVHGMPFSAMENDVREFFHGLRVDAVHLLKDHVGRNNGNGLVKFLSPQDTFEALKRNRMLMIQRYVEVSPATERQWVAAGGHITFKQSMGPSGQAHPPPQTLPRSKSPSGQKRSRSRSPHEAGFCVYLKGLPFEAENKHVIDFFKKLDIVEDSIYIAYGPNGKATGEGFVEFRNDADYKAALCRHKQYMGNRFIQVHPITKKGMLEKIDMIRKRLQNFSYDQRELVLNPEGEVSSAKVCAHITNIPFSITKMDVLQFLEGIPVDESAVHVLVDNNGQGLGQALVQFKTEDDAHKSEHLHRKKLNGREAFVHIVTLEDMREIEKNPPAQGKKGLKISVPGNPAVPVIPSAGMPAAGIPTAGIPGAGLPSAGMPGAGMPSSGMPGPGMPGPGIPGAGIPGPAMPGPAMPGPAMPGPAMPGPAMPGPAMPGPAMPGPAMPGPAIPGPAIPGPAIPGAGIPSAGGEEHVFLTVGSKEANNGPPFNFPGNFGGPNAFGPPLPPPGLGGAFGDVRPVMPSVGNSGLPGLGLEVPGFGGAPNNISGPSGFGGIPQNFGNGPGSLNAPPGFGSGPPGLGSVPGHLSGPPAFGPGPGPGPIHIGGPPGFGASSGKPGPTIIKVQNMPFTVSIDEILDFFYGYQVIPGSVCLKYNEKGMPTGEAMVAFESRDEATAAVIDLNDRPIGSRKVKLVLG.

The RRM 1 domain occupies 304 to 379 (LYVSVHGMPF…RYVEVSPATE (76 aa)). Phosphoserine occurs at positions 352 and 375. The segment at 393–424 (QSMGPSGQAHPPPQTLPRSKSPSGQKRSRSRS) is disordered. Over residues 408–417 (LPRSKSPSGQ) the composition is skewed to polar residues. Phosphoserine occurs at positions 420, 422, and 424. Residues 430–507 (FCVYLKGLPF…RFIQVHPITK (78 aa)) form the RRM 2 domain. Serine 525 is modified (phosphoserine). Residues 849–913 (FGGIPQNFGN…PGFGASSGKP (65 aa)) form a disordered region. Residues 876–887 (LGSVPGHLSGPP) are compositionally biased toward low complexity. An RRM 3 domain is found at 916–992 (TIIKVQNMPF…GSRKVKLVLG (77 aa)).

The protein localises to the nucleus. In Mus musculus (Mouse), this protein is RNA-binding protein 12 (Rbm12).